Here is a 127-residue protein sequence, read N- to C-terminus: Tyrosine-protein phosphatase 2 (127 aa).

The region spanning 1 to 127 (QGSKVIVMVT…PRDCEAPILV (127 aa)) is the Tyrosine-protein phosphatase domain. Positions 63–81 (VYDNDDGTEQNDEQTEEEP) are enriched in acidic residues. Positions 63 to 82 (VYDNDDGTEQNDEQTEEEPE) are disordered.

Belongs to the protein-tyrosine phosphatase family.

The enzyme catalyses O-phospho-L-tyrosyl-[protein] + H2O = L-tyrosyl-[protein] + phosphate. The chain is Tyrosine-protein phosphatase 2 (STY-2) from Styela plicata (Wrinkled sea squirt).